The sequence spans 90 residues: Probable Fe(2+)-trafficking protein (90 aa).

This sequence belongs to the Fe(2+)-trafficking protein family.

In terms of biological role, could be a mediator in iron transactions between iron acquisition and iron-requiring processes, such as synthesis and/or repair of Fe-S clusters in biosynthetic enzymes. The chain is Probable Fe(2+)-trafficking protein from Cupriavidus taiwanensis (strain DSM 17343 / BCRC 17206 / CCUG 44338 / CIP 107171 / LMG 19424 / R1) (Ralstonia taiwanensis (strain LMG 19424)).